The chain runs to 166 residues: Small ribosomal subunit protein uS5 (166 aa).

Residues 12-75 form the S5 DRBM domain; it reads YIEKLVQVNR…EAARRNMIQV (64 aa).

This sequence belongs to the universal ribosomal protein uS5 family. In terms of assembly, part of the 30S ribosomal subunit. Contacts proteins S4 and S8.

Its function is as follows. With S4 and S12 plays an important role in translational accuracy. Functionally, located at the back of the 30S subunit body where it stabilizes the conformation of the head with respect to the body. The polypeptide is Small ribosomal subunit protein uS5 (Ectopseudomonas mendocina (strain ymp) (Pseudomonas mendocina)).